The chain runs to 155 residues: Endoribonuclease YbeY (155 aa).

Zn(2+)-binding residues include H120, H124, and H130.

The protein belongs to the endoribonuclease YbeY family. Requires Zn(2+) as cofactor.

The protein resides in the cytoplasm. Functionally, single strand-specific metallo-endoribonuclease involved in late-stage 70S ribosome quality control and in maturation of the 3' terminus of the 16S rRNA. This chain is Endoribonuclease YbeY, found in Staphylococcus epidermidis (strain ATCC 35984 / DSM 28319 / BCRC 17069 / CCUG 31568 / BM 3577 / RP62A).